The sequence spans 341 residues: RNA 3'-terminal phosphate cyclase (341 aa).

ATP contacts are provided by residues Gln-102 and 283 to 287 (HLADQ). His-308 serves as the catalytic Tele-AMP-histidine intermediate.

It belongs to the RNA 3'-terminal cyclase family. Type 1 subfamily.

It is found in the cytoplasm. The enzyme catalyses a 3'-end 3'-phospho-ribonucleotide-RNA + ATP = a 3'-end 2',3'-cyclophospho-ribonucleotide-RNA + AMP + diphosphate. Functionally, catalyzes the conversion of 3'-phosphate to a 2',3'-cyclic phosphodiester at the end of RNA. The mechanism of action of the enzyme occurs in 3 steps: (A) adenylation of the enzyme by ATP; (B) transfer of adenylate to an RNA-N3'P to produce RNA-N3'PP5'A; (C) and attack of the adjacent 2'-hydroxyl on the 3'-phosphorus in the diester linkage to produce the cyclic end product. The biological role of this enzyme is unknown but it is likely to function in some aspects of cellular RNA processing. The sequence is that of RNA 3'-terminal phosphate cyclase from Pseudomonas aeruginosa (strain UCBPP-PA14).